Reading from the N-terminus, the 276-residue chain is Protein canopy homolog 3 (276 aa).

A signal peptide spans Met-1–Pro-26. The region spanning Ser-47 to Pro-269 is the Saposin B-type domain. Cystine bridges form between Cys-49–Cys-206, Cys-52–Cys-194, and Cys-104–Cys-166. Asn-153 carries an N-linked (GlcNAc...) asparagine glycan. The stretch at Asn-153–Asp-179 forms a coiled coil. The disordered stretch occupies residues Ile-218 to Leu-276.

This sequence belongs to the canopy family. As to quaternary structure, interacts with HSP90B1; this interaction is disrupted in the presence of ATP. Interacts with TLR1, TLR2, TLR4 and TLR9. Strongest interaction with TLR4.

Its subcellular location is the endoplasmic reticulum. Its function is as follows. Toll-like receptor (TLR)-specific co-chaperone for HSP90B1. Required for proper TLR folding, except that of TLR3, and hence controls TLR exit from the endoplasmic reticulum. Consequently, required for both innate and adaptive immune responses. This Mus musculus (Mouse) protein is Protein canopy homolog 3 (Cnpy3).